A 246-amino-acid polypeptide reads, in one-letter code: Acetoacetate decarboxylase (246 aa).

Lys116 serves as the catalytic Schiff-base intermediate with acetoacetate.

The protein belongs to the ADC family.

It carries out the reaction acetoacetate + H(+) = acetone + CO2. In terms of biological role, catalyzes the conversion of acetoacetate to acetone and carbon dioxide. This is Acetoacetate decarboxylase from Burkholderia cenocepacia (strain HI2424).